The primary structure comprises 230 residues: Ribonuclease 3 (230 aa).

The region spanning 5-134 is the RNase III domain; it reads EALLKSSFAI…FLGALLLDKG (130 aa). Glu47 serves as a coordination point for Mg(2+). Asp51 is an active-site residue. Residues Asp120 and Glu123 each coordinate Mg(2+). The active site involves Glu123. The 70-residue stretch at 160–229 folds into the DRBM domain; it reads DYKTSLQEIL…AENALKALSE (70 aa).

Belongs to the ribonuclease III family. As to quaternary structure, homodimer. The cofactor is Mg(2+).

It localises to the cytoplasm. The catalysed reaction is Endonucleolytic cleavage to 5'-phosphomonoester.. Functionally, digests double-stranded RNA. Involved in the processing of primary rRNA transcript to yield the immediate precursors to the large and small rRNAs (23S and 16S). Processes some mRNAs, and tRNAs when they are encoded in the rRNA operon. Processes pre-crRNA and tracrRNA of type II CRISPR loci if present in the organism. The sequence is that of Ribonuclease 3 from Streptococcus uberis (strain ATCC BAA-854 / 0140J).